Reading from the N-terminus, the 1239-residue chain is Protein strawberry notch homolog 1 (1239 aa).

Positions alanine 684–phenylalanine 837 are disordered. Residues serine 694 to alanine 713 show a composition bias toward basic and acidic residues. Over residues aspartate 728–asparagine 744 the composition is skewed to acidic residues. Positions lysine 778–lysine 790 are enriched in basic residues. Residues phenylalanine 814–phenylalanine 837 show a composition bias toward low complexity. Positions valine 838–proline 866 form a coiled coil.

This sequence belongs to the SBNO family.

The protein localises to the nucleus. Functionally, plays a crucial role in the regulation of neural stem cells (NSCs) proliferation. Enhances the phosphorylation of GSK3B through the PI3K-Akt signaling pathway, thereby upregulating the Wnt/beta-catenin signaling pathway and promoting the proliferation of NSCs. In Gallus gallus (Chicken), this protein is Protein strawberry notch homolog 1 (SBNO1).